We begin with the raw amino-acid sequence, 793 residues long: Putative potassium transporter 12 (793 aa).

At 1–54 the chain is on the cytoplasmic side; that stretch reads MASISDSETTNHGSIWDLDQNLDQPMDEEASRLKNMYTEKKFSSILLLRLAFQS. The chain crosses the membrane as a helical span at residues 55 to 75; sequence LGVVFGDLGTSPLYVFYNIFP. Residues 76–87 are Extracellular-facing; that stretch reads HGVDDDEDVIGA. A helical membrane pass occupies residues 88-108; the sequence is LSLIIYTLTLIPLMKYVFVVL. The Cytoplasmic segment spans residues 109–175; that stretch reads RANDNGQGGT…EGHVYKKNCL (67 aa). The helical transmembrane segment at 176–196 threads the bilayer; the sequence is LILVLIGTCTAIGDGILTPAI. Over 197 to 215 the chain is Extracellular; the sequence is SVLSASGGIRVQNQKMSTD. Residues 216–236 traverse the membrane as a helical segment; it reads VVVVVAVIILIGLFSMQHYGT. Residues 237-238 are Cytoplasmic-facing; it reads DK. The helical transmembrane segment at 239–259 threads the bilayer; sequence VGWLFAPIVLLWFILIGTIGA. Residues 260–289 lie on the Extracellular side of the membrane; the sequence is LNIHKYNSSVLKAYNPVYIYRYFRRGKSES. Residue N266 is glycosylated (N-linked (GlcNAc...) asparagine). The chain crosses the membrane as a helical span at residues 290-310; sequence WTSLGGIMLSITGTEALYADL. The Cytoplasmic portion of the chain corresponds to 311–315; sequence CHFPV. The chain crosses the membrane as a helical span at residues 316-338; sequence LAIQIAFTLVVFPCLLLAYTGQA. Topologically, residues 339 to 359 are extracellular; it reads AYIISNKDHVVDAFYRSIPDT. Residues 360 to 380 form a helical membrane-spanning segment; the sequence is IYWPVFIIATLAAIVASQATI. Residues 381–411 are Cytoplasmic-facing; the sequence is SATYSIIKQALALGCFPRVSVVHTSKKFLGQ. Residues 412-432 form a helical membrane-spanning segment; that stretch reads IYIPDINWVLMILCIAVTAGF. Residues 433–444 lie on the Extracellular side of the membrane; it reads KNQSQIGNAYGT. The N-linked (GlcNAc...) asparagine glycan is linked to N434. The helical transmembrane segment at 445–465 threads the bilayer; it reads AVVIVMLVTTFLMVPIMLLVW. Residues 466 to 468 are Cytoplasmic-facing; the sequence is KSH. The helical transmembrane segment at 469–489 threads the bilayer; it reads WILVVIFIVLSLMVELPYFTA. Over 490 to 496 the chain is Extracellular; it reads CINKVDQ. Residues 497–517 traverse the membrane as a helical segment; it reads GGWVPLVVATTCFIIMYVWHF. The Cytoplasmic segment spans residues 518–793; the sequence is CTVKRYEFEM…LLNVGQIYYI (276 aa).

This sequence belongs to the HAK/KUP transporter (TC 2.A.72.3) family.

It is found in the membrane. In terms of biological role, high-affinity potassium transporter. This is Putative potassium transporter 12 (HAK12) from Oryza sativa subsp. japonica (Rice).